A 306-amino-acid polypeptide reads, in one-letter code: Putative syntaxin-3 (306 aa).

The Cytoplasmic segment spans residues 1 to 279 (MPRDRLKELQ…QKRARKMKVC (279 aa)). Residues 40–180 (QDADFEMFLE…QLSDEEIENA (141 aa)) form a required for the regulation of the defecation motor program region. In terms of domain architecture, t-SNARE coiled-coil homology spans 204–266 (YDEVKSRADE…KQARGNVEEA (63 aa)). Residues 280 to 300 (IIIGSIIAVLILILFIQSAVC) form a helical; Anchor for type IV membrane protein membrane-spanning segment. Residues 301-306 (HFTPIC) are Extracellular-facing.

Belongs to the syntaxin family. In terms of tissue distribution, expressed in body wall, pharyngeal, vulval and enteric muscles and in some head neurons.

The protein localises to the cell membrane. Functionally, potentially involved in docking of synaptic vesicles at presynaptic active zones. Acts in the intestine to regulate anterior body muscle contractions (aBOC) and the expulsion steps during the defecation motor program (DMP). The protein is Putative syntaxin-3 of Caenorhabditis elegans.